A 307-amino-acid polypeptide reads, in one-letter code: Auxiliary protein GraX (307 aa).

As to quaternary structure, homodimer. Interacts with GraR and GraS.

Functionally, plays a role in resistance against cationic antimicrobial peptides (CAMPs). Facilitates the activation of GraS to transduce the signal to GraR. This is Auxiliary protein GraX (graX) from Staphylococcus aureus (strain NCTC 8325 / PS 47).